Consider the following 430-residue polypeptide: Serine--tRNA ligase (430 aa).

235–237 (TSE) serves as a coordination point for L-serine. An ATP-binding site is contributed by 266-268 (RSE). Residue Glu289 participates in L-serine binding. ATP is bound at residue 353–356 (EISS). An L-serine-binding site is contributed by Ser388.

This sequence belongs to the class-II aminoacyl-tRNA synthetase family. Type-1 seryl-tRNA synthetase subfamily. In terms of assembly, homodimer. The tRNA molecule binds across the dimer.

It is found in the cytoplasm. The enzyme catalyses tRNA(Ser) + L-serine + ATP = L-seryl-tRNA(Ser) + AMP + diphosphate + H(+). The catalysed reaction is tRNA(Sec) + L-serine + ATP = L-seryl-tRNA(Sec) + AMP + diphosphate + H(+). The protein operates within aminoacyl-tRNA biosynthesis; selenocysteinyl-tRNA(Sec) biosynthesis; L-seryl-tRNA(Sec) from L-serine and tRNA(Sec): step 1/1. In terms of biological role, catalyzes the attachment of serine to tRNA(Ser). Is also able to aminoacylate tRNA(Sec) with serine, to form the misacylated tRNA L-seryl-tRNA(Sec), which will be further converted into selenocysteinyl-tRNA(Sec). The polypeptide is Serine--tRNA ligase (Azoarcus sp. (strain BH72)).